We begin with the raw amino-acid sequence, 94 residues long: MNLANLQLFAHKKGGGSTSNGRDSQAKRLGAKAADGQTVSGGSILYRQRGTHIYPGANVGRGGDDTLFAKVEGVVRFERKGRDKKQVSVYPIAK.

The propeptide occupies 1 to 9; it reads MNLANLQLF. The disordered stretch occupies residues 11–33; sequence HKKGGGSTSNGRDSQAKRLGAKA.

Belongs to the bacterial ribosomal protein bL27 family. Post-translationally, the N-terminus is cleaved by ribosomal processing cysteine protease Prp.

This chain is Large ribosomal subunit protein bL27, found in Streptococcus agalactiae serotype V (strain ATCC BAA-611 / 2603 V/R).